Reading from the N-terminus, the 196-residue chain is Large ribosomal subunit protein uL14my (196 aa).

The transit peptide at 1-62 (MATALASKLS…TILKCVDNSC (62 aa)) directs the protein to the mitochondrion. The interval 148–175 (EKKGQNNSHGSKRKMEYNQPTGTRVFGP) is disordered.

Belongs to the universal ribosomal protein uL14 family. As to quaternary structure, part of the mitochondrial 50S ribosomal subunit. As to expression, mostly expressed in pistils and inflorescences, including floral organs and meristems, and, to a lower extent, in leaves.

Its subcellular location is the mitochondrion. In terms of biological role, binds to 23S rRNA in mitochondrion. Required for the formation of the proximal region of the ovule primordium during floral organogenesis, thus participating in patterning and growth of ovule. Also regulates the initiation and/or maintenance of integument and embryo sac ontogenesis. Prevents inappropriate cell death in the young ovule. The chain is Large ribosomal subunit protein uL14my (HLL) from Arabidopsis thaliana (Mouse-ear cress).